The following is a 621-amino-acid chain: Glutamine--fructose-6-phosphate aminotransferase [isomerizing] (621 aa).

Cys-2 functions as the Nucleophile; for GATase activity in the catalytic mechanism. The Glutamine amidotransferase type-2 domain maps to 2-223; the sequence is CGIIGYVGEG…DRELGIISIS (222 aa). 2 consecutive SIS domains span residues 289-436 and 470-611; these read LHLE…HKFT and LSKQ…IDKP. Catalysis depends on Lys-616, which acts as the For Fru-6P isomerization activity.

Homodimer.

Its subcellular location is the plastid. The protein resides in the chloroplast. It carries out the reaction D-fructose 6-phosphate + L-glutamine = D-glucosamine 6-phosphate + L-glutamate. In terms of biological role, catalyzes the first step in hexosamine metabolism, converting fructose-6P into glucosamine-6P using glutamine as a nitrogen source. The sequence is that of Glutamine--fructose-6-phosphate aminotransferase [isomerizing] from Cyanidium caldarium (Red alga).